The following is a 333-amino-acid chain: Galactinol synthase 5 (333 aa).

Residue K103 is part of the active site. The Mn(2+) site is built by D119, D121, and H257.

Belongs to the glycosyltransferase 8 family. Galactosyltransferase subfamily. It depends on a divalent metal cation as a cofactor.

It is found in the cytoplasm. It catalyses the reaction myo-inositol + UDP-alpha-D-galactose = alpha-D-galactosyl-(1-&gt;3)-1D-myo-inositol + UDP + H(+). Galactinol synthase involved in the biosynthesis of raffinose family oligosaccharides (RFOs) that function as osmoprotectants. May promote plant stress tolerance. The protein is Galactinol synthase 5 (GOLS5) of Arabidopsis thaliana (Mouse-ear cress).